Reading from the N-terminus, the 218-residue chain is Octanoyltransferase (218 aa).

Residues 32–218 enclose the BPL/LPL catalytic domain; sequence GEAAEAIWLL…LRTFPQHFPD (187 aa). Residues 71-78, 151-153, and 164-166 contribute to the substrate site; these read RGGQYTYH, AIG, and GLS. The active-site Acyl-thioester intermediate is Cys-182.

This sequence belongs to the LipB family.

It is found in the cytoplasm. It catalyses the reaction octanoyl-[ACP] + L-lysyl-[protein] = N(6)-octanoyl-L-lysyl-[protein] + holo-[ACP] + H(+). It functions in the pathway protein modification; protein lipoylation via endogenous pathway; protein N(6)-(lipoyl)lysine from octanoyl-[acyl-carrier-protein]: step 1/2. Catalyzes the transfer of endogenously produced octanoic acid from octanoyl-acyl-carrier-protein onto the lipoyl domains of lipoate-dependent enzymes. Lipoyl-ACP can also act as a substrate although octanoyl-ACP is likely to be the physiological substrate. This Cereibacter sphaeroides (strain ATCC 17029 / ATH 2.4.9) (Rhodobacter sphaeroides) protein is Octanoyltransferase.